A 367-amino-acid polypeptide reads, in one-letter code: Aspartate-semialdehyde dehydrogenase (367 aa).

NADP(+)-binding positions include 10-13, 37-38, and glutamine 73; these read RGMV and TS. Residue arginine 102 coordinates phosphate. The active-site Acyl-thioester intermediate is cysteine 135. Cysteine 135 carries the post-translational modification S-cysteinyl cysteine; in inhibited form. Glutamine 162 contributes to the substrate binding site. NADP(+) contacts are provided by residues 165–166 and proline 193; that span reads SG. Glutamate 241 provides a ligand contact to substrate. Lysine 244 is a phosphate binding site. Residue arginine 267 coordinates substrate. Histidine 274 functions as the Proton acceptor in the catalytic mechanism. An NADP(+)-binding site is contributed by glutamine 350.

The protein belongs to the aspartate-semialdehyde dehydrogenase family. As to quaternary structure, homodimer.

It catalyses the reaction L-aspartate 4-semialdehyde + phosphate + NADP(+) = 4-phospho-L-aspartate + NADPH + H(+). The protein operates within amino-acid biosynthesis; L-lysine biosynthesis via DAP pathway; (S)-tetrahydrodipicolinate from L-aspartate: step 2/4. It functions in the pathway amino-acid biosynthesis; L-methionine biosynthesis via de novo pathway; L-homoserine from L-aspartate: step 2/3. Its pathway is amino-acid biosynthesis; L-threonine biosynthesis; L-threonine from L-aspartate: step 2/5. Functionally, catalyzes the NADPH-dependent formation of L-aspartate-semialdehyde (L-ASA) by the reductive dephosphorylation of L-aspartyl-4-phosphate. The chain is Aspartate-semialdehyde dehydrogenase from Escherichia coli O6:H1 (strain CFT073 / ATCC 700928 / UPEC).